Here is a 232-residue protein sequence, read N- to C-terminus: Uracil-DNA glycosylase (232 aa).

Asp64 (proton acceptor) is an active-site residue.

Belongs to the uracil-DNA glycosylase (UDG) superfamily. UNG family.

The protein localises to the cytoplasm. The enzyme catalyses Hydrolyzes single-stranded DNA or mismatched double-stranded DNA and polynucleotides, releasing free uracil.. In terms of biological role, excises uracil residues from the DNA which can arise as a result of misincorporation of dUMP residues by DNA polymerase or due to deamination of cytosine. The sequence is that of Uracil-DNA glycosylase from Shouchella clausii (strain KSM-K16) (Alkalihalobacillus clausii).